Reading from the N-terminus, the 227-residue chain is Ornithine decarboxylase antizyme 1 (227 aa).

It belongs to the ODC antizyme family. As to quaternary structure, interacts with ODC1 and thereby sterically blocks ODC homodimerization. Forms a ternary complex with PSMB4 and OAZ1 before PSMB4 is incorporated into the 20S proteasome. Interacts with AZIN2; this interaction disrupts the interaction between the antizyme and ODC1. Interacts with FAM171A1.

Functionally, ornithine decarboxylase (ODC) antizyme protein that negatively regulates ODC activity and intracellular polyamine biosynthesis and uptake in response to increased intracellular polyamine levels. Binds to ODC monomers, inhibiting the assembly of the functional ODC homodimer, and targets the monomers for ubiquitin-independent proteolytic destruction by the 26S proteasome. Triggers ODC degradation by inducing the exposure of a cryptic proteasome-interacting surface of ODC. Stabilizes AZIN2 by interfering with its ubiquitination. Also inhibits cellular uptake of polyamines by inactivating the polyamine uptake transporter. SMAD1/OAZ1/PSMB4 complex mediates the degradation of the CREBBP/EP300 repressor SNIP1. Involved in the translocation of AZIN2 from ER-Golgi intermediate compartment (ERGIC) to the cytosol. The chain is Ornithine decarboxylase antizyme 1 (Oaz1) from Mus musculus (Mouse).